The primary structure comprises 445 residues: Tubulin beta chain (445 aa).

Residues Gln-11, Glu-69, Ser-138, Gly-142, Thr-143, Gly-144, Asn-204, and Asn-226 each coordinate GTP. Glu-69 contributes to the Mg(2+) binding site.

Belongs to the tubulin family. As to quaternary structure, dimer of alpha and beta chains. A typical microtubule is a hollow water-filled tube with an outer diameter of 25 nm and an inner diameter of 15 nM. Alpha-beta heterodimers associate head-to-tail to form protofilaments running lengthwise along the microtubule wall with the beta-tubulin subunit facing the microtubule plus end conferring a structural polarity. Microtubules usually have 13 protofilaments but different protofilament numbers can be found in some organisms and specialized cells. The cofactor is Mg(2+).

Its subcellular location is the cytoplasm. It is found in the cytoskeleton. In terms of biological role, tubulin is the major constituent of microtubules, a cylinder consisting of laterally associated linear protofilaments composed of alpha- and beta-tubulin heterodimers. Microtubules grow by the addition of GTP-tubulin dimers to the microtubule end, where a stabilizing cap forms. Below the cap, tubulin dimers are in GDP-bound state, owing to GTPase activity of alpha-tubulin. This chain is Tubulin beta chain (TUB-2), found in Schizophyllum commune (Split gill fungus).